Reading from the N-terminus, the 106-residue chain is Immunoglobulin lambda constant 7 (106 aa).

In terms of domain architecture, Ig-like spans 7 to 101 (PSVTLFPPSS…EGSTVEKTVA (95 aa)). Cysteines 28 and 87 form a disulfide.

Immunoglobulins are composed of two identical heavy chains and two identical light chains; disulfide-linked.

It localises to the secreted. It is found in the cell membrane. Constant region of immunoglobulin light chains. Immunoglobulins, also known as antibodies, are membrane-bound or secreted glycoproteins produced by B lymphocytes. In the recognition phase of humoral immunity, the membrane-bound immunoglobulins serve as receptors which, upon binding of a specific antigen, trigger the clonal expansion and differentiation of B lymphocytes into immunoglobulins-secreting plasma cells. Secreted immunoglobulins mediate the effector phase of humoral immunity, which results in the elimination of bound antigens. The antigen binding site is formed by the variable domain of one heavy chain, together with that of its associated light chain. Thus, each immunoglobulin has two antigen binding sites with remarkable affinity for a particular antigen. The variable domains are assembled by a process called V-(D)-J rearrangement and can then be subjected to somatic hypermutations which, after exposure to antigen and selection, allow affinity maturation for a particular antigen. This chain is Immunoglobulin lambda constant 7, found in Homo sapiens (Human).